The following is a 168-amino-acid chain: Large ribosomal subunit protein bL9 (168 aa).

The interval 148–168 (ENGEGSVQPAAEAAEVASTEA) is disordered. The span at 157 to 168 (AAEAAEVASTEA) shows a compositional bias: low complexity.

Belongs to the bacterial ribosomal protein bL9 family.

Binds to the 23S rRNA. The chain is Large ribosomal subunit protein bL9 from Herpetosiphon aurantiacus (strain ATCC 23779 / DSM 785 / 114-95).